We begin with the raw amino-acid sequence, 330 residues long: Malate dehydrogenase (330 aa).

15–21 contributes to the NAD(+) binding site; sequence GAGGQIG. Residues arginine 95 and arginine 101 each coordinate substrate. NAD(+) is bound by residues asparagine 108, glutamine 115, and 132–134; that span reads VGN. Residues asparagine 134 and arginine 165 each coordinate substrate. The active-site Proton acceptor is the histidine 190.

The protein belongs to the LDH/MDH superfamily. MDH type 2 family.

It carries out the reaction (S)-malate + NAD(+) = oxaloacetate + NADH + H(+). Catalyzes the reversible oxidation of malate to oxaloacetate. This Corynebacterium jeikeium (strain K411) protein is Malate dehydrogenase.